Consider the following 353-residue polypeptide: 6-phosphogluconolactonase (353 aa).

It belongs to the cycloisomerase 2 family.

It is found in the cytoplasm. It carries out the reaction 6-phospho-D-glucono-1,5-lactone + H2O = 6-phospho-D-gluconate + H(+). Its pathway is carbohydrate degradation; pentose phosphate pathway; D-ribulose 5-phosphate from D-glucose 6-phosphate (oxidative stage): step 2/3. Functionally, carboxylic ester hydrolase that may be involved in ulvan degradation. Ulvan is the main polysaccharide component of the Ulvales (green seaweed) cell wall. It is composed of disaccharide building blocks comprising 3-sulfated rhamnose (Rha3S) linked to D-glucuronic acid (GlcA), L-iduronic acid (IduA), or D-xylose (Xyl). Catalyzes the hydrolysis of 6-phosphogluconolactone to 6-phosphogluconate. This is 6-phosphogluconolactonase (pgl) from Formosa agariphila (strain DSM 15362 / KCTC 12365 / LMG 23005 / KMM 3901 / M-2Alg 35-1).